A 66-amino-acid polypeptide reads, in one-letter code: Nigrocin-2ISb (66 aa).

A signal peptide spans 1-22; sequence MFTLKKSMLLLFFLGTINLSLC. A propeptide spans 23–43 (removed in mature form); that stretch reads QEERDAEEERRDEDNAKMEEI. Cysteine 60 and cysteine 66 are disulfide-bonded.

Expressed by the skin glands.

The protein resides in the secreted. Its function is as follows. Has antimicrobial activity against Gram-negative bacterium E.coli ATCC 8739 (MIC=50 ug), against Gram positive bacteria S.aureus ATCC 6538 (MIC=3.1 ug), methicillin-resistant S.aureus ATCC 43300 (MIC=12.5 ug), B.subtilis ATCC 6633 (MIC=12.5 ug) and against fungus C.albicans ATCC 90028 (MIC=50 ug). The polypeptide is Nigrocin-2ISb (Odorrana ishikawae (Ishikawa's frog)).